We begin with the raw amino-acid sequence, 345 residues long: Homeobox protein DBX1 (345 aa).

Disordered stretches follow at residues 55-103 (PRGS…VSPA) and 241-345 (KERE…ITVS). Positions 182–241 (GMLRRAVFSDVQRKALEKMFQKQKYISKPDRKKLAAKLGLKDSQVKIWFQNRRMKWRNSK) form a DNA-binding region, homeobox. The segment covering 300 to 309 (DPRHLRDPRL) has biased composition (basic and acidic residues). The segment covering 330–345 (SDSEDDEEGEEEITVS) has biased composition (acidic residues).

It belongs to the H2.0 homeobox family.

The protein resides in the nucleus. In terms of biological role, could have a role in patterning the central nervous system during embryogenesis. Has a key role in regulating the distinct phenotypic features that distinguish two major classes of ventral interneurons, V0 and V1 neurons. Regulates the transcription factor profile, neurotransmitter phenotype, intraspinal migratory path and axonal trajectory of V0 neurons, features that differentiate them from an adjacent set of V1 neurons. This is Homeobox protein DBX1 (DBX1) from Bos taurus (Bovine).